The sequence spans 243 residues: MSMLCYTLIIAFLIGIWAAPKSEDNVPLGSPATSDLSDTSCAQTHEGLKTSRNTDQRHPAPKKAEDQELASAANIIVDPKLFQKRRFQSPRVLFSTQPPPLSRDEQSVEFLDNEDTLNRNIRAKRETHPVHNRGEYSVCDSISVWVANKTKAMDIKGKPVTVMVDVNLNNHVYKQYFFETKYRNPNPVPSGCRGIDSGHWNSYCTTTQTYVRALTMEGNQASWRFIRIDAACVCVISRKTENF.

A signal peptide spans 1–18 (MSMLCYTLIIAFLIGIWA). Positions 19 to 125 (APKSEDNVPL…TLNRNIRAKR (107 aa)) are excised as a propeptide. Basic and acidic residues predominate over residues 47–66 (GLKTSRNTDQRHPAPKKAED). The tract at residues 47–67 (GLKTSRNTDQRHPAPKKAEDQ) is disordered. 2 disulfide bridges follow: C139-C204 and C192-C234. N-linked (GlcNAc...) asparagine glycosylation occurs at N148.

The protein belongs to the NGF-beta family. As to quaternary structure, homodimer; non-covalently linked. In terms of tissue distribution, expressed by the venom gland.

It is found in the secreted. Nerve growth factor is important for the development and maintenance of the sympathetic and sensory nervous systems. It stimulates division and differentiation of sympathetic and embryonic sensory neurons as well as basal forebrain cholinergic neurons in the brain. Its relevance in the snake venom is not clear. However, it has been shown to inhibit metalloproteinase-dependent proteolysis of platelet glycoprotein Ib alpha, suggesting a metalloproteinase inhibition to prevent metalloprotease autodigestion and/or protection against prey proteases. Binds a lipid between the two protein chains in the homodimer. The lipid-bound form promotes histamine relase from mouse mast cells, contrary to the lipid-free form. The polypeptide is Venom nerve growth factor 2 (Pseudonaja textilis (Eastern brown snake)).